Consider the following 282-residue polypeptide: Probable endonuclease 4 (282 aa).

The Zn(2+) site is built by histidine 71, histidine 111, glutamate 147, aspartate 181, histidine 184, histidine 218, aspartate 231, histidine 233, and glutamate 263.

Belongs to the AP endonuclease 2 family. The cofactor is Zn(2+).

It carries out the reaction Endonucleolytic cleavage to 5'-phosphooligonucleotide end-products.. In terms of biological role, endonuclease IV plays a role in DNA repair. It cleaves phosphodiester bonds at apurinic or apyrimidinic (AP) sites, generating a 3'-hydroxyl group and a 5'-terminal sugar phosphate. In Protochlamydia amoebophila (strain UWE25), this protein is Probable endonuclease 4.